The following is a 125-amino-acid chain: Protein Bouncer (125 aa).

Residues methionine 1–proline 18 form the signal peptide. 5 cysteine pairs are disulfide-bonded: cysteine 23/cysteine 48, cysteine 26/cysteine 35, cysteine 42/cysteine 66, cysteine 72/cysteine 91, and cysteine 92/cysteine 97. The UPAR/Ly6 domain maps to cysteine 23–asparagine 98. N-linked (GlcNAc...) asparagine glycosylation is present at asparagine 32. The N-linked (GlcNAc...) asparagine glycan is linked to asparagine 84. The GPI-anchor amidated asparagine moiety is linked to residue asparagine 98. A propeptide spans serine 99–leucine 125 (removed in mature form).

The protein belongs to the SPACA4/bouncer family. As to quaternary structure, interacts with spermatocyte complex composed of izumo1, spaca6 and tmem81. In terms of processing, N-glycosylated. As to expression, highly expressed in oocytes. Not expressed in testis.

It localises to the cell membrane. Oocyte-expressed fertilization factor that mediates sperm-egg binding and is essential for sperm entry into the egg. Necessary and sufficient to mediate species-specific gamete recognition and fertilization, which is essential for vertebrate species performing external fertilization. External fertilization cannot guarantee that only conspecific sperm reaches the egg by precopulatory mate choice: proteins such as Bouncer can therefore support the selection of conspecific sperm. The polypeptide is Protein Bouncer (Danio rerio (Zebrafish)).